An 890-amino-acid chain; its full sequence is DNA mismatch repair protein MutS (890 aa).

An ATP-binding site is contributed by 607–614 (GPNMSGKS). The tract at residues 832–851 (ESQLSFFGGEQSSKKQDKPL) is disordered.

Belongs to the DNA mismatch repair MutS family.

In terms of biological role, this protein is involved in the repair of mismatches in DNA. It is possible that it carries out the mismatch recognition step. This protein has a weak ATPase activity. This Bacillus cereus (strain B4264) protein is DNA mismatch repair protein MutS.